Reading from the N-terminus, the 319-residue chain is tRNA (guanine(9)-N(1))-methyltransferase Trmt10A (319 aa).

Disordered stretches follow at residues 16-87 (LSLN…KRQL) and 275-319 (AKIT…SLDS). The segment covering 17–33 (SLNNCPGTTPGTPMSKN) has biased composition (polar residues). The short motif at 35–42 (LKKQRKLA) is the Nuclear localization signal element. Basic and acidic residues-rich tracts occupy residues 40–58 (KLAE…EREK), 78–87 (SRKELKKRQL), and 276–302 (KITD…ESDK). A coiled-coil region spans residues 44-67 (FAELRKLRREREREKKKQKRREAK). Residues 83–274 (KKRQLADGGK…ETIPMRKGAK (192 aa)) enclose the SAM-dependent MTase TRM10-type domain.

It belongs to the class IV-like SAM-binding methyltransferase superfamily. TRM10 family.

The protein localises to the nucleus. Its subcellular location is the nucleolus. It localises to the chromosome. The enzyme catalyses guanosine(9) in tRNA + S-adenosyl-L-methionine = N(1)-methylguanosine(9) in tRNA + S-adenosyl-L-homocysteine + H(+). In terms of biological role, S-adenosyl-L-methionine-dependent guanine N(1)-methyltransferase that catalyzes the formation of N(1)-methylguanine at position 9 (m1G9) in tRNAs. Modulates Mettl3-mediated N6-methyladenosine (m6A) methylation of mRNA 5'-UTRs and 3'-UTRs independent of its methyltransferase activity; influences mRNA stability and protein levels, in particular of Hsp70 chaperone proteins and other stress response proteins. Also regulates stability of transcripts encoding proteins involved in signaling processes and proteins involved in neurogenesis and axon guidance pathways. This Drosophila melanogaster (Fruit fly) protein is tRNA (guanine(9)-N(1))-methyltransferase Trmt10A.